We begin with the raw amino-acid sequence, 556 residues long: 2-isopropylmalate synthase (556 aa).

The 275-residue stretch at 33-307 folds into the Pyruvate carboxyltransferase domain; sequence PIWCSSDLRD…DPELDFSDID (275 aa). Mg(2+) is bound by residues Asp42, His246, His248, and Asn282. The regulatory domain stretch occupies residues 439–556; it reads ANTPYALISH…SLSQTQAKAA (118 aa).

It belongs to the alpha-IPM synthase/homocitrate synthase family. LeuA type 2 subfamily. In terms of assembly, homodimer. The cofactor is Mg(2+).

It is found in the cytoplasm. It catalyses the reaction 3-methyl-2-oxobutanoate + acetyl-CoA + H2O = (2S)-2-isopropylmalate + CoA + H(+). Its pathway is amino-acid biosynthesis; L-leucine biosynthesis; L-leucine from 3-methyl-2-oxobutanoate: step 1/4. Its function is as follows. Catalyzes the condensation of the acetyl group of acetyl-CoA with 3-methyl-2-oxobutanoate (2-ketoisovalerate) to form 3-carboxy-3-hydroxy-4-methylpentanoate (2-isopropylmalate). The sequence is that of 2-isopropylmalate synthase from Pseudomonas savastanoi pv. phaseolicola (strain 1448A / Race 6) (Pseudomonas syringae pv. phaseolicola (strain 1448A / Race 6)).